The primary structure comprises 264 residues: Small ribosomal subunit protein eS1 (264 aa).

The disordered stretch occupies residues 232–264; it reads HGEGGGAGKPSGDEAGTKVERADGYEPPVQESV. The segment covering 242–255 has biased composition (basic and acidic residues); sequence SGDEAGTKVERADG.

This sequence belongs to the eukaryotic ribosomal protein eS1 family. As to quaternary structure, component of the small ribosomal subunit. Mature ribosomes consist of a small (40S) and a large (60S) subunit. The 40S subunit contains about 33 different proteins and 1 molecule of RNA (18S). The 60S subunit contains about 49 different proteins and 3 molecules of RNA (28S, 5.8S and 5S). Part of the small subunit (SSU) processome, composed of more than 70 proteins and the RNA chaperone small nucleolar RNA (snoRNA) U3.

It is found in the cytoplasm. The protein resides in the nucleus. It localises to the nucleolus. Its function is as follows. Component of the small ribosomal subunit. The ribosome is a large ribonucleoprotein complex responsible for the synthesis of proteins in the cell. Part of the small subunit (SSU) processome, first precursor of the small eukaryotic ribosomal subunit. During the assembly of the SSU processome in the nucleolus, many ribosome biogenesis factors, an RNA chaperone and ribosomal proteins associate with the nascent pre-rRNA and work in concert to generate RNA folding, modifications, rearrangements and cleavage as well as targeted degradation of pre-ribosomal RNA by the RNA exosome. May play a role during erythropoiesis. This is Small ribosomal subunit protein eS1 from Taeniopygia guttata (Zebra finch).